Reading from the N-terminus, the 703-residue chain is Lactococcin-G-processing and transport ATP-binding protein LagD (703 aa).

The Peptidase C39 domain maps to 7–132 (QQDEKDCGVA…KEWTGVLLFP (126 aa)). Cys13 is an active-site residue. In terms of domain architecture, ABC transmembrane type-1 spans 153–435 (PILIKQKSLF…IINLQVKMQK (283 aa)). Helical transmembrane passes span 162–182 (FITIFGIISSYYFQGLLDNII), 189–209 (TLNILSIGLIFVYLFRVLFEY), 224–244 (MSIMLGYFKHVLSLPLSFFAT), 267–287 (ATLSLILDIGMVILVGTTLAI), 291–311 (QLFLLTLAFLPFYILVVYVFI), 381–401 (MVIELISSVLILWLGSSYVID), and 409–429 (LITYNALLVFFTEPLQNIINL). The region spanning 469-703 (IKLDKVSFSY…EGVYRRLLNA (235 aa)) is the ABC transporter domain. 502 to 509 (GVSGSGKS) serves as a coordination point for ATP.

This sequence belongs to the ABC transporter superfamily. LagD family. As to quaternary structure, homodimer.

The protein localises to the cell membrane. Functionally, lagD (TC 3.A.1) is involved in processing the signal peptide and probably also in export of the bacteriocin lactococcin G. In Lactococcus lactis subsp. lactis (Streptococcus lactis), this protein is Lactococcin-G-processing and transport ATP-binding protein LagD (lagD).